The chain runs to 340 residues: 4-hydroxythreonine-4-phosphate dehydrogenase (340 aa).

The substrate site is built by His-141 and Thr-142. A divalent metal cation-binding residues include His-171, His-216, and His-271. Lys-279, Asn-288, and Arg-297 together coordinate substrate.

It belongs to the PdxA family. As to quaternary structure, homodimer. The cofactor is Zn(2+). Mg(2+) serves as cofactor. Co(2+) is required as a cofactor.

The protein localises to the cytoplasm. The enzyme catalyses 4-(phosphooxy)-L-threonine + NAD(+) = 3-amino-2-oxopropyl phosphate + CO2 + NADH. The protein operates within cofactor biosynthesis; pyridoxine 5'-phosphate biosynthesis; pyridoxine 5'-phosphate from D-erythrose 4-phosphate: step 4/5. Its function is as follows. Catalyzes the NAD(P)-dependent oxidation of 4-(phosphooxy)-L-threonine (HTP) into 2-amino-3-oxo-4-(phosphooxy)butyric acid which spontaneously decarboxylates to form 3-amino-2-oxopropyl phosphate (AHAP). The sequence is that of 4-hydroxythreonine-4-phosphate dehydrogenase from Desulforapulum autotrophicum (strain ATCC 43914 / DSM 3382 / VKM B-1955 / HRM2) (Desulfobacterium autotrophicum).